We begin with the raw amino-acid sequence, 211 residues long: LexA repressor (211 aa).

A DNA-binding region (H-T-H motif) is located at residues 28 to 48; sequence VREVGEAVGLSSSSTIHGHIE. Active-site for autocatalytic cleavage activity residues include Ser-132 and Lys-170.

The protein belongs to the peptidase S24 family. In terms of assembly, homodimer.

The catalysed reaction is Hydrolysis of Ala-|-Gly bond in repressor LexA.. Represses a number of genes involved in the response to DNA damage (SOS response), including recA and lexA. In the presence of single-stranded DNA, RecA interacts with LexA causing an autocatalytic cleavage which disrupts the DNA-binding part of LexA, leading to derepression of the SOS regulon and eventually DNA repair. The sequence is that of LexA repressor from Leuconostoc citreum (strain KM20).